Consider the following 544-residue polypeptide: Chaperonin GroEL (544 aa).

ATP is bound by residues 29–32 (TLGP), 86–90 (DGTTT), Gly-413, 476–478 (NAA), and Asp-492.

It belongs to the chaperonin (HSP60) family. In terms of assembly, forms a cylinder of 14 subunits composed of two heptameric rings stacked back-to-back. Interacts with the co-chaperonin GroES.

Its subcellular location is the cytoplasm. It carries out the reaction ATP + H2O + a folded polypeptide = ADP + phosphate + an unfolded polypeptide.. Together with its co-chaperonin GroES, plays an essential role in assisting protein folding. The GroEL-GroES system forms a nano-cage that allows encapsulation of the non-native substrate proteins and provides a physical environment optimized to promote and accelerate protein folding. In Bacillus velezensis (strain DSM 23117 / BGSC 10A6 / LMG 26770 / FZB42) (Bacillus amyloliquefaciens subsp. plantarum), this protein is Chaperonin GroEL.